The chain runs to 360 residues: Photosystem II protein D1 (360 aa).

The next 3 membrane-spanning stretches (helical) occupy residues 29 to 46, 118 to 133, and 142 to 156; these read YVGW…TATT, HFLL…QWEL, and WICV…AATA. H118 lines the chlorophyll a pocket. Residue Y126 coordinates pheophytin a. 2 residues coordinate [CaMn4O5] cluster: D170 and E189. The chain crosses the membrane as a helical span at residues 197-218; it reads FHMLGVAGVFGGSLFSAMHGSL. H198 contributes to the chlorophyll a binding site. A quinone is bound by residues H215 and 264–265; that span reads SF. Residue H215 coordinates Fe cation. H272 provides a ligand contact to Fe cation. The chain crosses the membrane as a helical span at residues 274–288; it reads FLGAWPVIGIWFTAM. The [CaMn4O5] cluster site is built by H332, E333, D342, and A344. A propeptide spanning residues 345–360 is cleaved from the precursor; that stretch reads SGEQAPVALTAPAING.

The protein belongs to the reaction center PufL/M/PsbA/D family. PSII is composed of 1 copy each of membrane proteins PsbA, PsbB, PsbC, PsbD, PsbE, PsbF, PsbH, PsbI, PsbJ, PsbK, PsbL, PsbM, PsbT, PsbX, PsbY, PsbZ, Psb30/Ycf12, peripheral proteins PsbO, CyanoQ (PsbQ), PsbU, PsbV and a large number of cofactors. It forms dimeric complexes. The D1/D2 heterodimer binds P680, chlorophylls that are the primary electron donor of PSII, and subsequent electron acceptors. It shares a non-heme iron and each subunit binds pheophytin, quinone, additional chlorophylls, carotenoids and lipids. D1 provides most of the ligands for the Mn4-Ca-O5 cluster of the oxygen-evolving complex (OEC). There is also a Cl(-1) ion associated with D1 and D2, which is required for oxygen evolution. The PSII complex binds additional chlorophylls, carotenoids and specific lipids. serves as cofactor. In terms of processing, tyr-161 forms a radical intermediate that is referred to as redox-active TyrZ, YZ or Y-Z. Post-translationally, C-terminally processed by CtpA; processing is essential to allow assembly of the oxygen-evolving complex and thus photosynthetic growth.

The protein resides in the cellular thylakoid membrane. The enzyme catalyses 2 a plastoquinone + 4 hnu + 2 H2O = 2 a plastoquinol + O2. Its function is as follows. Photosystem II (PSII) is a light-driven water:plastoquinone oxidoreductase that uses light energy to abstract electrons from H(2)O, generating O(2) and a proton gradient subsequently used for ATP formation. It consists of a core antenna complex that captures photons, and an electron transfer chain that converts photonic excitation into a charge separation. The D1/D2 (PsbA/PsbD) reaction center heterodimer binds P680, the primary electron donor of PSII as well as several subsequent electron acceptors. The chain is Photosystem II protein D1 from Microcystis aeruginosa.